We begin with the raw amino-acid sequence, 319 residues long: uncharacterized protein (319 aa).

An N-terminal signal peptide occupies residues 1–27; sequence MYKKFVPFAVFLFLFFVSFEMMENPHA. The 177-residue stretch at 130 to 306 folds into the NodB homology domain; the sequence is PMVAFLINVA…QIKDKGYALG (177 aa).

The protein belongs to the polysaccharide deacetylase family.

This is an uncharacterized protein from Bacillus subtilis (strain 168).